The primary structure comprises 69 residues: Toxin Tma3 (69 aa).

The 65-residue stretch at 2-66 (KDDYPVDTAK…SPTKKSGRCN (65 aa)) folds into the LCN-type CS-alpha/beta domain. 4 cysteine pairs are disulfide-bonded: cysteine 14-cysteine 65, cysteine 18-cysteine 41, cysteine 27-cysteine 48, and cysteine 31-cysteine 50.

It belongs to the long (4 C-C) scorpion toxin superfamily. Sodium channel inhibitor family. In terms of tissue distribution, expressed by the venom gland.

The protein localises to the secreted. Its function is as follows. Inhibits voltage-gated sodium channels (Nav). This toxin shows insect lethality against crickets. This Tityus macrochirus (Scorpion) protein is Toxin Tma3.